The primary structure comprises 525 residues: G patch domain-containing protein 3 (525 aa).

Disordered regions lie at residues 54-85 and 246-317; these read ERGP…PASD and EQEE…QERT. The span at 274–299 shows a compositional bias: acidic residues; the sequence is DEPEDEGQQQEEEEESGSEEDDDRGE. Over residues 300 to 317 the composition is skewed to basic and acidic residues; the sequence is EWERHEALHEDVTGQERT. The G-patch domain occupies 411–459; the sequence is TKGIGRKVMERQGWAEGQGLGSRCSGVPEALDGDGQHPRCKRGLGYHGE.

Interacts with mitochondrial MAVS; the interaction is markedly increased upon viral infection.

The protein resides in the nucleus. Its subcellular location is the cytoplasm. Functionally, involved in transcriptional regulation. It is able to activate transcription from CXCR4 promoter and therefore it might control neural crest cell migration involved in ocular and craniofacial development. Is a negative regulator of immune antiviral response, acting via down-regulation of RIG-I-like receptors signaling and inhibition of type I interferon production. The control mechanism involves interaction with mitochondrial MAVS and inhibition of MAVS assembly with downstream proteins implicated in antiviral response, such as TBK1 and TRAF6. This is G patch domain-containing protein 3 (Gpatch3) from Mus musculus (Mouse).